Here is a 157-residue protein sequence, read N- to C-terminus: Phosphopantetheine adenylyltransferase (157 aa).

Residue S8 coordinates substrate. ATP contacts are provided by residues 8–9 (SF) and H16. Substrate-binding residues include K40, T72, and R86. ATP contacts are provided by residues 87 to 89 (GLR), E97, and 122 to 128 (HSFLSSS).

The protein belongs to the bacterial CoaD family. In terms of assembly, homohexamer. Mg(2+) serves as cofactor.

It is found in the cytoplasm. It carries out the reaction (R)-4'-phosphopantetheine + ATP + H(+) = 3'-dephospho-CoA + diphosphate. It participates in cofactor biosynthesis; coenzyme A biosynthesis; CoA from (R)-pantothenate: step 4/5. In terms of biological role, reversibly transfers an adenylyl group from ATP to 4'-phosphopantetheine, yielding dephospho-CoA (dPCoA) and pyrophosphate. In Prochlorococcus marinus (strain MIT 9313), this protein is Phosphopantetheine adenylyltransferase.